The chain runs to 872 residues: Exoglucanase A (872 aa).

A signal peptide spans 1–40 (MSTLGKRAGVRRRVRAVATAATATALVAVPLTTLATSASA). Positions 41–477 (APVHVDNPYA…PVIGGTTPVE (437 aa)) are catalytic. Cystine bridges form between Cys140–Cys202 and Cys374–Cys428. The active-site Proton donor is Asp188. Asp410 (nucleophile) is an active-site residue. 3 consecutive Fibronectin type-III domains span residues 484–569 (VPTG…TQSG), 579–667 (VPAG…TQTG), and 677–765 (VPTG…TQAA). A CBM2 domain is found at 763–872 (QAATSGGCTV…TLNGVACTLG (110 aa)). Cys770 and Cys869 are disulfide-bonded.

This sequence belongs to the glycosyl hydrolase 6 (cellulase B) family.

It catalyses the reaction Hydrolysis of (1-&gt;4)-beta-D-glucosidic linkages in cellulose and cellotetraose, releasing cellobiose from the non-reducing ends of the chains.. Functionally, this enzyme hydrolyzes 1,4-beta-D-glucosidic linkages of cellulose. Weak activity against carboxymethylcellulose, bacterial microcrystalline cellulose and barley beta-glucan. Also has weak endoglucanase activity. Hydrolyzes glucosidic bonds with inversion of anomeric configuration. In Cellulomonas fimi (strain ATCC 484 / DSM 20113 / JCM 1341 / CCUG 24087 / LMG 16345 / NBRC 15513 / NCIMB 8980 / NCTC 7547 / NRS-133), this protein is Exoglucanase A (cbhA).